We begin with the raw amino-acid sequence, 214 residues long: Cdc42 effector protein 2 (214 aa).

S2 is modified (N-acetylserine). Positions 30–44 (ISPPLGDFRHTIHIG) constitute a CRIB domain. Phosphoserine occurs at positions 31, 101, 137, 141, and 145. Positions 118–151 (ALTLPTTQAPPKPPRLHLESPQPSPKSSPQEAGN) are disordered.

It belongs to the BORG/CEP family. In terms of assembly, interacts with CDC42 and RHOQ, in a GTP-dependent manner, and with SEPT7.

The protein localises to the endomembrane system. It localises to the cytoplasm. It is found in the cytoskeleton. Functionally, probably involved in the organization of the actin cytoskeleton. May act downstream of CDC42 to induce actin filament assembly leading to cell shape changes. Induces pseudopodia formation in fibroblasts in a CDC42-dependent manner. The sequence is that of Cdc42 effector protein 2 (Cdc42ep2) from Rattus norvegicus (Rat).